A 917-amino-acid chain; its full sequence is Thiamine biosynthesis bifunctional protein ThiEC (917 aa).

The tract at residues 1–243 (MSNEYPYASM…EGWKAVRGDK (243 aa)) is thiamine-phosphate synthase. 4-amino-2-methyl-5-(diphosphooxymethyl)pyrimidine-binding positions include 48-52 (QLRAK) and D84. 2 residues coordinate Mg(2+): D85 and D109. 4-amino-2-methyl-5-(diphosphooxymethyl)pyrimidine is bound at residue S128. 2-[(2R,5Z)-2-carboxy-4-methylthiazol-5(2H)-ylidene]ethyl phosphate is bound at residue 157-159 (STT). K160 is a 4-amino-2-methyl-5-(diphosphooxymethyl)pyrimidine binding site. Residues G196 and 216-217 (VS) each bind 2-[(2R,5Z)-2-carboxy-4-methylthiazol-5(2H)-ylidene]ethyl phosphate. The tract at residues 256–311 (PATDTQAAQEGAAKPGSEATEKKFTNAKDAKDAQKLAKQQRVDIAARGSKQRDKAH) is disordered. The interval 271–917 (GSEATEKKFT…GGKLYSTAQE (647 aa)) is phosphomethylpyrimidine synthase. The segment covering 274-290 (ATEKKFTNAKDAKDAQK) has biased composition (basic and acidic residues). Residues N487, M516, Y545, H581, 601-603 (SRG), 642-645 (DGLR), and E681 each bind 5-amino-1-(5-phospho-beta-D-ribosyl)imidazole. A Zn(2+)-binding site is contributed by H685. Y708 lines the 5-amino-1-(5-phospho-beta-D-ribosyl)imidazole pocket. H749 contacts Zn(2+). The [4Fe-4S] cluster site is built by C829, C832, and C837.

In the N-terminal section; belongs to the thiamine-phosphate synthase family. This sequence in the C-terminal section; belongs to the ThiC family. Requires [4Fe-4S] cluster as cofactor.

It catalyses the reaction 2-[(2R,5Z)-2-carboxy-4-methylthiazol-5(2H)-ylidene]ethyl phosphate + 4-amino-2-methyl-5-(diphosphooxymethyl)pyrimidine + 2 H(+) = thiamine phosphate + CO2 + diphosphate. It carries out the reaction 2-(2-carboxy-4-methylthiazol-5-yl)ethyl phosphate + 4-amino-2-methyl-5-(diphosphooxymethyl)pyrimidine + 2 H(+) = thiamine phosphate + CO2 + diphosphate. The catalysed reaction is 4-methyl-5-(2-phosphooxyethyl)-thiazole + 4-amino-2-methyl-5-(diphosphooxymethyl)pyrimidine + H(+) = thiamine phosphate + diphosphate. The enzyme catalyses 5-amino-1-(5-phospho-beta-D-ribosyl)imidazole + S-adenosyl-L-methionine = 4-amino-2-methyl-5-(phosphooxymethyl)pyrimidine + CO + 5'-deoxyadenosine + formate + L-methionine + 3 H(+). It participates in cofactor biosynthesis; thiamine diphosphate biosynthesis; thiamine phosphate from 4-amino-2-methyl-5-diphosphomethylpyrimidine and 4-methyl-5-(2-phosphoethyl)-thiazole: step 1/1. Condenses 4-methyl-5-(beta-hydroxyethyl)thiazole monophosphate (THZ-P) and 2-methyl-4-amino-5-hydroxymethyl pyrimidine pyrophosphate (HMP-PP) to form thiamine monophosphate (TMP). Its function is as follows. Catalyzes the synthesis of the hydroxymethylpyrimidine phosphate (HMP-P) moiety of thiamine from aminoimidazole ribotide (AIR) in a radical S-adenosyl-L-methionine (SAM)-dependent reaction. The sequence is that of Thiamine biosynthesis bifunctional protein ThiEC (thiE/thiC) from Bifidobacterium longum (strain NCC 2705).